An 83-amino-acid polypeptide reads, in one-letter code: Neurotoxin LmNaTx3 (83 aa).

The first 21 residues, M1–S21, serve as a signal peptide directing secretion. Residues K22–C83 enclose the LCN-type CS-alpha/beta domain. 4 disulfide bridges follow: C32–C83, C36–C59, C45–C64, and C49–C66.

This sequence belongs to the long (4 C-C) scorpion toxin superfamily. Sodium channel inhibitor family. Alpha subfamily. As to expression, expressed by the venom gland.

Its subcellular location is the secreted. In terms of biological role, binds voltage-independently at site-3 of voltage-gated sodium channels (Nav) and inhibits the inactivation of the activated channels, thereby blocking neuronal transmission. The polypeptide is Neurotoxin LmNaTx3 (Lychas mucronatus (Chinese swimming scorpion)).